The following is a 304-amino-acid chain: Recombination-associated protein RdgC (304 aa).

This sequence belongs to the RdgC family.

The protein localises to the cytoplasm. It is found in the nucleoid. May be involved in recombination. The protein is Recombination-associated protein RdgC of Shewanella sp. (strain MR-4).